The chain runs to 617 residues: Leucine aminopeptidase 2 (617 aa).

Residues 139-141 and 271-276 contribute to the a peptide site; these read QCQ and PYGGME. His300 contacts Zn(2+). Catalysis depends on Glu301, which acts as the Proton acceptor. Zn(2+) contacts are provided by His304 and Glu323. The Proton donor role is filled by Tyr388.

The protein belongs to the peptidase M1 family. Requires Zn(2+) as cofactor.

It localises to the cytoplasm. Its subcellular location is the nucleus. It catalyses the reaction an epoxide + H2O = an ethanediol. Its function is as follows. Aminopeptidase that preferentially cleaves di- and tripeptides. Also has low epoxide hydrolase activity (in vitro). Can hydrolyze the epoxide leukotriene LTA(4) but it forms preferentially 5,6-dihydroxy-7,9,11,14-eicosatetraenoic acid rather than the cytokine leukotriene B(4) as the product compared to the homologous mammalian enzyme (in vitro). In Neosartorya fischeri (strain ATCC 1020 / DSM 3700 / CBS 544.65 / FGSC A1164 / JCM 1740 / NRRL 181 / WB 181) (Aspergillus fischerianus), this protein is Leucine aminopeptidase 2.